The chain runs to 604 residues: 2-isopropylmalate synthase 2, mitochondrial (604 aa).

The N-terminal 50 residues, 1–50 (MVKHSFIALAEHASKLRRSIPPVKLTYKNMLRDPSVKYRAFAPPKMVKRI), are a transit peptide targeting the mitochondrion. The 276-residue stretch at 60–335 (PRWLSTDLRD…SPNLDFSDLT (276 aa)) folds into the Pyruvate carboxyltransferase domain. A divalent metal cation is bound by residues Asp-69, His-274, His-276, and Asn-310.

The protein belongs to the alpha-IPM synthase/homocitrate synthase family. LeuA type 2 subfamily. Homodimer. A divalent metal cation is required as a cofactor.

It is found in the mitochondrion. The enzyme catalyses 3-methyl-2-oxobutanoate + acetyl-CoA + H2O = (2S)-2-isopropylmalate + CoA + H(+). It functions in the pathway amino-acid biosynthesis; L-leucine biosynthesis; L-leucine from 3-methyl-2-oxobutanoate: step 1/4. In terms of biological role, catalyzes the condensation of the acetyl group of acetyl-CoA with 3-methyl-2-oxobutanoate (2-oxoisovalerate) to form 3-carboxy-3-hydroxy-4-methylpentanoate (2-isopropylmalate). Redundant to LEU4, responsible for about 20% of alpha-IPMS activity. Involved in leucine synthesis. The sequence is that of 2-isopropylmalate synthase 2, mitochondrial from Saccharomyces cerevisiae (strain ATCC 204508 / S288c) (Baker's yeast).